Reading from the N-terminus, the 178-residue chain is Zinc finger protein ZAT11 (178 aa).

2 consecutive C2H2-type zinc fingers follow at residues 47–69 and 94–116; these read FECK…RASH and HKCS…MRRH.

In terms of tissue distribution, expressed in leaves.

The protein localises to the nucleus. In terms of biological role, probable transcription factor that may be involved in stress responses. This chain is Zinc finger protein ZAT11 (ZAT11), found in Arabidopsis thaliana (Mouse-ear cress).